The sequence spans 173 residues: Mesencephalic astrocyte-derived neurotrophic factor homolog (173 aa).

Residues 1-22 (MKTTHLVLVLCFLAGVAQTTLA) form the signal peptide. Disulfide bonds link Cys28–Cys114, Cys31–Cys103, Cys61–Cys72, and Cys148–Cys151.

Belongs to the ARMET family.

The protein localises to the secreted. In terms of biological role, required during the maturation of the embryonic nervous system for maintenance of neuronal and cuticular connectivity. Essential for maintenance of dopaminergic neurons and dopamine levels. The sequence is that of Mesencephalic astrocyte-derived neurotrophic factor homolog from Drosophila persimilis (Fruit fly).